Reading from the N-terminus, the 718-residue chain is Nucleolar protein 11 (718 aa).

Lys346 bears the N6-methyllysine mark.

Interacts with UTP4. Interacts with FBL/fibrillarin in a transcription-dependent manner. May associate with the proposed t-UTP subcomplex of the SSU processome containing at least UTP4, WDR43, HEATR1, UTP15, WDR75.

The protein resides in the nucleus. The protein localises to the nucleolus. Functionally, ribosome biogenesis factor. May be required for both optimal rDNA transcription and small subunit (SSU) pre-rRNA processing at sites A', A0, 1 and 2b. The sequence is that of Nucleolar protein 11 (NOL11) from Bos taurus (Bovine).